The chain runs to 508 residues: ATP synthase subunit alpha (508 aa).

An ATP-binding site is contributed by glycine 169–threonine 176.

Belongs to the ATPase alpha/beta chains family. F-type ATPases have 2 components, CF(1) - the catalytic core - and CF(0) - the membrane proton channel. CF(1) has five subunits: alpha(3), beta(3), gamma(1), delta(1), epsilon(1). CF(0) has three main subunits: a(1), b(2) and c(9-12). The alpha and beta chains form an alternating ring which encloses part of the gamma chain. CF(1) is attached to CF(0) by a central stalk formed by the gamma and epsilon chains, while a peripheral stalk is formed by the delta and b chains.

The protein localises to the cell inner membrane. The catalysed reaction is ATP + H2O + 4 H(+)(in) = ADP + phosphate + 5 H(+)(out). Functionally, produces ATP from ADP in the presence of a proton gradient across the membrane. The alpha chain is a regulatory subunit. The chain is ATP synthase subunit alpha from Allorhizobium ampelinum (strain ATCC BAA-846 / DSM 112012 / S4) (Agrobacterium vitis (strain S4)).